A 728-amino-acid chain; its full sequence is FAS1 domain-containing protein fsc1 (728 aa).

A signal peptide spans 1–21 (MNLQFRLYLLFILLFISFANG). The Vacuolar portion of the chain corresponds to 22 to 670 (KNEYEDKSTS…TKRQNRWRIT (649 aa)). 2 FAS1 domains span residues 29–151 (STSI…DNII) and 154–285 (PPPA…SSLI). Asparagine 89 carries an N-linked (GlcNAc...) asparagine glycan. N-linked (GlcNAc...) asparagine glycans are attached at residues asparagine 404 and asparagine 501. A helical transmembrane segment spans residues 671 to 691 (FISISGLLLSVGICVLCYKIY). At 692 to 728 (FKFFRNRFMNQGEREPLLAPADSDTMAGRRNSSSLSV) the chain is on the cytoplasmic side.

It localises to the vacuole membrane. Required for the fusion of autophagosomes with the vacuole. This chain is FAS1 domain-containing protein fsc1 (fsc1), found in Schizosaccharomyces pombe (strain 972 / ATCC 24843) (Fission yeast).